The chain runs to 243 residues: Small ribosomal subunit protein uS3 (243 aa).

The KH type-2 domain maps to 22-93 (LNEFLTRELA…SVELYAEKVA (72 aa)). Positions 195 to 243 (QQGKNGPKKPQPDHILVTEPKDEPAPLEPTSDIRSLAPAPLPQPVAAVA) are disordered.

This sequence belongs to the universal ribosomal protein uS3 family.

The sequence is that of Small ribosomal subunit protein uS3 (RpS3) from Manduca sexta (Tobacco hawkmoth).